A 399-amino-acid polypeptide reads, in one-letter code: Forkhead box protein A4 (399 aa).

Positions 119–213 form a DNA-binding region, fork-head; sequence KPPYSYISLI…ENGCYLRRQK (95 aa). Residues 219–234 are compositionally biased toward basic and acidic residues; that stretch reads RSKSGEREKKVNKPGD. The tract at residues 219–290 is disordered; sequence RSKSGEREKK…VGLSPTSEQA (72 aa). A compositionally biased stretch (polar residues) spans 267–277; the sequence is STGSSIHQASG.

The protein resides in the nucleus. Its function is as follows. Transcriptional repressor involved in embryonic nervous system development. Plays a role in the induction and patterning of the anterior-posterior neural axis. Involved in the establishment of floor plate differentiation from neural plate cells during gastrulation. Binds the anf1 promoter sequence to restrict expression of anf1 to the anterior of the neural plate, thereby patterning the forebrain. Can bind to the HNF-3-alpha DNA target sequence. Cooperates with t/bra in a dose-dependent manner to specify dorsal mesoderm formation, including notochord. May be involved in the dorso-ventral patterning of the mesoderm. Binds to DNA via the target sequence 5'-[GA]TAAA[TC]A-3', with 5'-GTAAATA-3' being the preferred binding site. The sequence is that of Forkhead box protein A4 from Xenopus tropicalis (Western clawed frog).